Reading from the N-terminus, the 173-residue chain is Small ribosomal subunit protein uS4c (173 aa).

The S4 RNA-binding domain occupies 94 to 155 (SRLDSKIYRS…TKLTSELIEK (62 aa)).

The protein belongs to the universal ribosomal protein uS4 family. Part of the 30S ribosomal subunit. Contacts protein S5. The interaction surface between S4 and S5 is involved in control of translational fidelity.

The protein resides in the plastid. Its function is as follows. One of the primary rRNA binding proteins, it binds directly to 16S rRNA where it nucleates assembly of the body of the 30S subunit. With S5 and S12 plays an important role in translational accuracy. This is Small ribosomal subunit protein uS4c (rps4) from Helicosporidium sp. subsp. Simulium jonesii (Green alga).